The chain runs to 143 residues: Large ribosomal subunit protein uL11 (143 aa).

Belongs to the universal ribosomal protein uL11 family. As to quaternary structure, part of the ribosomal stalk of the 50S ribosomal subunit. Interacts with L10 and the large rRNA to form the base of the stalk. L10 forms an elongated spine to which L12 dimers bind in a sequential fashion forming a multimeric L10(L12)X complex. One or more lysine residues are methylated.

Functionally, forms part of the ribosomal stalk which helps the ribosome interact with GTP-bound translation factors. The sequence is that of Large ribosomal subunit protein uL11 from Pseudomonas fluorescens (strain Pf0-1).